We begin with the raw amino-acid sequence, 464 residues long: 3-isopropylmalate dehydratase large subunit (464 aa).

Residues cysteine 337, cysteine 397, and cysteine 400 each contribute to the [4Fe-4S] cluster site.

The protein belongs to the aconitase/IPM isomerase family. LeuC type 1 subfamily. As to quaternary structure, heterodimer of LeuC and LeuD. [4Fe-4S] cluster serves as cofactor.

It catalyses the reaction (2R,3S)-3-isopropylmalate = (2S)-2-isopropylmalate. It participates in amino-acid biosynthesis; L-leucine biosynthesis; L-leucine from 3-methyl-2-oxobutanoate: step 2/4. In terms of biological role, catalyzes the isomerization between 2-isopropylmalate and 3-isopropylmalate, via the formation of 2-isopropylmaleate. The protein is 3-isopropylmalate dehydratase large subunit of Bacillus thuringiensis (strain Al Hakam).